The chain runs to 282 residues: Phosphate import ATP-binding protein PstB (282 aa).

Residues 36 to 277 (IEVKNLNFFY…PARKETEDYI (242 aa)) form the ABC transporter domain. Residue 68–75 (GPSGCGKS) coordinates ATP.

Belongs to the ABC transporter superfamily. Phosphate importer (TC 3.A.1.7) family. The complex is composed of two ATP-binding proteins (PstB), two transmembrane proteins (PstC and PstA) and a solute-binding protein (PstS).

The protein resides in the cell inner membrane. It carries out the reaction phosphate(out) + ATP + H2O = ADP + 2 phosphate(in) + H(+). Its function is as follows. Part of the ABC transporter complex PstSACB involved in phosphate import. Responsible for energy coupling to the transport system. The sequence is that of Phosphate import ATP-binding protein PstB from Burkholderia pseudomallei (strain 1710b).